A 608-amino-acid chain; its full sequence is Mitogen-activated protein kinase kinase kinase 1 (608 aa).

The span at 1-13 shows a compositional bias: basic residues; that stretch reads MDRILARMKKSTG. The tract at residues 1 to 20 is disordered; it reads MDRILARMKKSTGRRGGDKN. The tract at residues 1 to 325 is regulatory region; that stretch reads MDRILARMKK…VSNTSPIYPD (325 aa). S62 carries the post-translational modification Phosphoserine. The segment at 192 to 234 is binding with MPK4; that stretch reads MERTPTIVKSKGYLVPNNVVAVGVGVGGGIKGLRPPVLKPPPA. Disordered stretches follow at residues 228 to 247 and 256 to 287; these read VLKP…GSSW and SETV…EAEE. Acidic residues predominate over residues 271–287; it reads DGCDEEEGKEEEAEAEE. The Protein kinase domain maps to 333 to 587; sequence WQKGQLLGRG…AAELLNHPFV (255 aa). ATP contacts are provided by residues 339-347 and K361; that span reads LGRGSFGSV. D456 acts as the Proton acceptor in catalysis. The residue at position 603 (S603) is a Phosphoserine.

It belongs to the protein kinase superfamily. STE Ser/Thr protein kinase family. MAP kinase kinase kinase subfamily. Interacts with MKK1, MMK2 and MPK4. May form a ternary complex composed of MEKK1 and MKK1/MKK2 and MPK4. Interacts with RACK1A, RACK1B and RACK1C. Binds to CRLK1. Post-translationally, phosphorylated by CRLK1 in response to cold.

Its subcellular location is the cell membrane. The protein resides in the endosome. The catalysed reaction is L-seryl-[protein] + ATP = O-phospho-L-seryl-[protein] + ADP + H(+). It catalyses the reaction L-threonyl-[protein] + ATP = O-phospho-L-threonyl-[protein] + ADP + H(+). With respect to regulation, activated by cold via CRLK1-mediated phosphorylation and leading to elevated kinase activity towards MKK2. The MEKK1, MKK1/MKK2 and MPK4 function in a signaling pathway that modulates the expression of genes responding to biotic and abiotic stresses and also plays an important role in pathogen defense by negatively regulating innate immunity. Involved in the innate immune MAP kinase signaling cascade (MEKK1, MKK4/MKK5 and MPK3/MPK6) downstream of bacterial flagellin receptor FLS2. May be involved in the cold and salinity stress-mediated MAP kinase signaling cascade (MEKK1, MKK1/MKK2 and MPK4/MPK6). Activates by phosphorylation the downstream MKK2, MKK4 and MKK5 in a calcium-dependent manner. This Arabidopsis thaliana (Mouse-ear cress) protein is Mitogen-activated protein kinase kinase kinase 1 (MEKK1).